The sequence spans 111 residues: Nucleoid-associated protein LBA0378 (111 aa).

Belongs to the YbaB/EbfC family. As to quaternary structure, homodimer.

The protein resides in the cytoplasm. Its subcellular location is the nucleoid. Functionally, binds to DNA and alters its conformation. May be involved in regulation of gene expression, nucleoid organization and DNA protection. This chain is Nucleoid-associated protein LBA0378, found in Lactobacillus acidophilus (strain ATCC 700396 / NCK56 / N2 / NCFM).